Reading from the N-terminus, the 346-residue chain is Cytidine deaminase 5 (346 aa).

2 CMP/dCMP-type deaminase domains span residues 20–148 (TDHK…FGSE) and 183–304 (DLCS…ITGA). Substrate is bound at residue 58-60 (NVE). Residue histidine 71 coordinates Zn(2+). The active-site Proton donor is glutamate 73. Zn(2+)-binding residues include cysteine 104 and cysteine 107.

Belongs to the cytidine and deoxycytidylate deaminase family. Homodimer. Requires Zn(2+) as cofactor.

It carries out the reaction cytidine + H2O + H(+) = uridine + NH4(+). The catalysed reaction is 2'-deoxycytidine + H2O + H(+) = 2'-deoxyuridine + NH4(+). Its function is as follows. This enzyme scavenges exogenous and endogenous cytidine and 2'-deoxycytidine for UMP synthesis. The protein is Cytidine deaminase 5 (CDA5) of Arabidopsis thaliana (Mouse-ear cress).